Here is a 143-residue protein sequence, read N- to C-terminus: Boletus edulis lectin (143 aa).

Beta-D-Gal-(1-&gt;3)-alpha-D-GalNAc contacts are provided by residues Ala30, 49 to 50 (SG), and 72 to 73 (HN). N-acetyl-alpha-D-galactosamine-binding positions include 49 to 50 (SG) and 72 to 73 (HN). N,N'-diacetylchitobiose contacts are provided by residues 79–82 (DVVT), Arg103, and Tyr114. N-acetyl-alpha-D-glucosamine is bound by residues 79 to 82 (DVVT), Arg103, and Tyr114.

This sequence belongs to the fungal fruit body lectin family. Homotetramer.

Lectin that recognizes O-linked galactose-beta-1,3-N-acetylgalactosamine, a disaccharide (Thomsen-Friedenreich antigen or T-disaccharide), present on cell surface glycoproteins. Can also bind chitin, N,N'-diacetylchitobiose, N-acetylgalactosamine and N-acetylglucosamine. Inhibits proliferation of colon, breast and liver cancer cell lines (in vitro). This Boletus edulis (King bolete) protein is Boletus edulis lectin.